A 1040-amino-acid chain; its full sequence is Multidrug resistance protein MdtB (1040 aa).

The next 12 helical transmembrane spans lie at 16 to 36 (FIMR…AGII), 347 to 367 (LMMA…NIPA), 369 to 389 (IIPG…MVFL), 396 to 416 (LTLM…IVVI), 440 to 460 (IGFT…PLLF), 472 to 492 (FAIT…TLTP), 537 to 557 (WLTL…WVFI), 863 to 883 (LGST…VLGI), 888 to 908 (FIHP…ALLA), 911 to 931 (IAGS…IGIV), 968 to 988 (ILMT…STGV), and 998 to 1018 (IGMV…TPVI).

It belongs to the resistance-nodulation-cell division (RND) (TC 2.A.6) family. MdtB subfamily. Part of a tripartite efflux system composed of MdtA, MdtB and MdtC. MdtB forms a heteromultimer with MdtC.

The protein localises to the cell inner membrane. In terms of biological role, the MdtABC tripartite complex confers resistance against novobiocin and deoxycholate. The protein is Multidrug resistance protein MdtB of Escherichia coli O8 (strain IAI1).